Reading from the N-terminus, the 295-residue chain is Small ribosomal subunit protein uS2 (295 aa).

The protein belongs to the universal ribosomal protein uS2 family.

The chain is Small ribosomal subunit protein uS2 from Rickettsia typhi (strain ATCC VR-144 / Wilmington).